Here is a 75-residue protein sequence, read N- to C-terminus: MARYFRRRKFCRFTAENVVEIDYKDIATLKNYISESGKIVPSRITGTRAKYQRQLARAIKRARYLALLPYTDNHQ.

Belongs to the bacterial ribosomal protein bS18 family. In terms of assembly, part of the 30S ribosomal subunit. Forms a tight heterodimer with protein bS6.

In terms of biological role, binds as a heterodimer with protein bS6 to the central domain of the 16S rRNA, where it helps stabilize the platform of the 30S subunit. The protein is Small ribosomal subunit protein bS18 of Glaesserella parasuis serovar 5 (strain SH0165) (Haemophilus parasuis).